Consider the following 682-residue polypeptide: Cyclic nucleotide-gated cation channel (682 aa).

The disordered stretch occupies residues 1 to 41 (MTGQAALERSVSSHRLSVRSRLEGEAERAESAISRTDGDDD). The Cytoplasmic portion of the chain corresponds to 1–136 (MTGQAALERS…EGFVVSQSDD (136 aa)). Residues 20–30 (SRLEGEAERAE) show a composition bias toward basic and acidic residues. Residues 137 to 157 (IYYYWLFFIALASLYNWIMLV) traverse the membrane as a helical segment. The Extracellular portion of the chain corresponds to 158-169 (ARACFDQLQDEN). The helical transmembrane segment at 170–190 (FFLWVGLDYLCDVIYILDTCI) threads the bilayer. Residues 191–218 (RLRTGYLEQGLLVKDLAKLRDNYIRTLQ) lie on the Cytoplasmic side of the membrane. A helical transmembrane segment spans residues 219 to 239 (FKLDFLSILPTELLFFVTGYV). Residues 240–272 (PQLRFNRLLRFSRMFEFFDRTETRTNYPNAFRI) lie on the Extracellular side of the membrane. A helical membrane pass occupies residues 273–293 (CNLILYILVIIHWNACIYYAI). Residues 294 to 311 (SKALGLSSDTWVYSGQNK) lie on the Cytoplasmic side of the membrane. Residues 312 to 332 (TLSFCYVYCFYWSTLTLTTIG) form a helical membrane-spanning segment. At 333-343 (EMPPPVKDEEY) the chain is on the extracellular side. The helical transmembrane segment at 344 to 364 (VFVVFDFLVGVLIFATIVGNV) threads the bilayer. Over 365–682 (GSMIANMNAT…SAETNSEEET (318 aa)) the chain is Cytoplasmic. 3',5'-cyclic AMP-binding positions include 455–577 (LLVE…QGLL), E514, and R529. Residues 649–682 (GEHAGVPTHTHADIHAQPETHTRTSAETNSEEET) form a disordered region. The span at 658-672 (THADIHAQPETHTRT) shows a compositional bias: basic and acidic residues.

This sequence belongs to the cyclic nucleotide-gated cation channel (TC 1.A.1.5) family. As to expression, olfactory neurons.

Its subcellular location is the membrane. In terms of biological role, this cyclic nucleotide-gated channel is activated equally well by both cAMP and cGMP. The sequence is that of Cyclic nucleotide-gated cation channel from Ictalurus punctatus (Channel catfish).